Reading from the N-terminus, the 218-residue chain is N-(5'-phosphoribosyl)anthranilate isomerase (218 aa).

Belongs to the TrpF family.

It catalyses the reaction N-(5-phospho-beta-D-ribosyl)anthranilate = 1-(2-carboxyphenylamino)-1-deoxy-D-ribulose 5-phosphate. It participates in amino-acid biosynthesis; L-tryptophan biosynthesis; L-tryptophan from chorismate: step 3/5. The polypeptide is N-(5'-phosphoribosyl)anthranilate isomerase (Halobacterium salinarum (strain ATCC 29341 / DSM 671 / R1)).